The primary structure comprises 190 residues: Segregation and condensation protein B (190 aa).

This sequence belongs to the ScpB family. As to quaternary structure, homodimer. Homodimerization may be required to stabilize the binding of ScpA to the Smc head domains. Component of a cohesin-like complex composed of ScpA, ScpB and the Smc homodimer, in which ScpA and ScpB bind to the head domain of Smc. The presence of the three proteins is required for the association of the complex with DNA.

It localises to the cytoplasm. In terms of biological role, participates in chromosomal partition during cell division. May act via the formation of a condensin-like complex containing Smc and ScpA that pull DNA away from mid-cell into both cell halves. This is Segregation and condensation protein B from Bacillus mycoides (strain KBAB4) (Bacillus weihenstephanensis).